A 441-amino-acid polypeptide reads, in one-letter code: MKERSTELVQGFRHSVPYINAHRGKTFVVMLGGEAIEHENFANIVNDIGLLHSLGIRLVVVYGARPQIDVNLAQHNLEPIYHKHTRVTDAHTLELVKQAAGLLQLDITARLSMSLNNTPLQGAHINVVSGNFIIAQPLGIDDGVDYCHSGRIRRIDEEAIHRQLDSNAIVLIGPVAVSVTGESFNLTSEEVATQLAVKLKAEKMIGFCSSQGVTNQEGTIISELFPNDAQKRIEELEEHGDYHSGTVRFLRGAVKACRSGVRRSHLISYQEDGALVQELFSRDGIGTQIVMESAEQVRRATINDIGGILELIRPLEQQGILVRRSREQLEMEIDKFTIIERDNLTIACAALYPFPEEKIGEMACVAVHPDYRSSSRGEMLLQRVESQARQMGLRKLFVLTTRSIHWFQERGFTPAEVDVLPVEKQALYNYQRRSKILLADL.

The 140-residue stretch at 295-434 folds into the N-acetyltransferase domain; that stretch reads EQVRRATIND…QALYNYQRRS (140 aa).

The protein belongs to the acetyltransferase family. ArgA subfamily. As to quaternary structure, homohexamer.

The protein localises to the cytoplasm. The catalysed reaction is L-glutamate + acetyl-CoA = N-acetyl-L-glutamate + CoA + H(+). The protein operates within amino-acid biosynthesis; L-arginine biosynthesis; N(2)-acetyl-L-ornithine from L-glutamate: step 1/4. This chain is Amino-acid acetyltransferase, found in Serratia proteamaculans (strain 568).